Consider the following 396-residue polypeptide: Elongation factor Tu 1 (396 aa).

The 197-residue stretch at 10–206 folds into the tr-type G domain; sequence KPHCNIGTIG…TVDDYIPQPD (197 aa). The G1 stretch occupies residues 19 to 26; it reads GHVDHGKT. 19–26 is a binding site for GTP; that stretch reads GHVDHGKT. Mg(2+) is bound at residue T26. The interval 60-64 is G2; it reads GITIN. The interval 81-84 is G3; sequence DCPG. GTP is bound by residues 81-85 and 136-139; these read DCPGH and NKVD. The segment at 136–139 is G4; that stretch reads NKVD. The G5 stretch occupies residues 174–176; the sequence is SAK.

The protein belongs to the TRAFAC class translation factor GTPase superfamily. Classic translation factor GTPase family. EF-Tu/EF-1A subfamily. As to quaternary structure, monomer.

The protein resides in the cytoplasm. The catalysed reaction is GTP + H2O = GDP + phosphate + H(+). Functionally, GTP hydrolase that promotes the GTP-dependent binding of aminoacyl-tRNA to the A-site of ribosomes during protein biosynthesis. This Caulobacter sp. (strain K31) protein is Elongation factor Tu 1.